Consider the following 501-residue polypeptide: MFSNQYIQQRIHKANSLREEGKNPYQNGLKRSLTNAAFLEKYAYVKGLEEPKDKEKCESIVGRVKLLRLMGKACFIKVEDESTILQVYVSQNELNDEFKSLKKHLEVGDIVLVKGFPFATKTGELSIHALEFHILSKTIVPLPEKFHGLSDIELRYRQRYLDLIVNPSVKDVFKKRSLIVSSVRKFFEMEGFLEVETPMMHPIPGGANARPFITYHNALEVERYLRIAPELYLKRLIVGGFEAVFEINRNFRNEGMDHSHNPEFTMIEFYWAYHTYEDLIELSKRLFDYLLKTLNLDSKIIYNDMEVDFNQTSVISYLDALETIGGISKDILEKEDRLLAYLLEQGIKVEPNLTYGKLLAEAFDHFVEHQLINPTFVTQYPIEISPLARRNDSNPNIADRFELFIAGKEIANGFSELNDPLDQLERFKNQVAEKEKGDEEAQYMDEDYVWALAHGMPPTAGQGIGIDRLVMLLTGAKSIKDVILFPAMRPVKNDFNVESEE.

Glutamate 402 and glutamate 409 together coordinate Mg(2+).

The protein belongs to the class-II aminoacyl-tRNA synthetase family. Homodimer. It depends on Mg(2+) as a cofactor.

Its subcellular location is the cytoplasm. The catalysed reaction is tRNA(Lys) + L-lysine + ATP = L-lysyl-tRNA(Lys) + AMP + diphosphate. The polypeptide is Lysine--tRNA ligase (lysS) (Helicobacter pylori (strain ATCC 700392 / 26695) (Campylobacter pylori)).